The sequence spans 159 residues: Phosphopantetheine adenylyltransferase (159 aa).

Ser-9 provides a ligand contact to substrate. Residues 9–10 (SF) and His-17 contribute to the ATP site. Substrate is bound by residues Lys-41, Leu-74, and Lys-88. ATP contacts are provided by residues 89–91 (GLR), Glu-99, and 123–129 (YLHLSST).

Belongs to the bacterial CoaD family. As to quaternary structure, homohexamer. Requires Mg(2+) as cofactor.

It localises to the cytoplasm. The enzyme catalyses (R)-4'-phosphopantetheine + ATP + H(+) = 3'-dephospho-CoA + diphosphate. It participates in cofactor biosynthesis; coenzyme A biosynthesis; CoA from (R)-pantothenate: step 4/5. Its function is as follows. Reversibly transfers an adenylyl group from ATP to 4'-phosphopantetheine, yielding dephospho-CoA (dPCoA) and pyrophosphate. In Arthrobacter sp. (strain FB24), this protein is Phosphopantetheine adenylyltransferase.